A 442-amino-acid chain; its full sequence is Vacuolar zinc transporter ZRC1 (442 aa).

The Cytoplasmic portion of the chain corresponds to 1–8; that stretch reads MITGKELR. Residues 9-29 form a helical membrane-spanning segment; that stretch reads IISLLTLDTVFFLLEITIGYM. Topologically, residues 30 to 32 are vacuolar; the sequence is SHS. The chain crosses the membrane as a helical span at residues 33-53; it reads LALIADSFHMLNDIISLLVAL. The Cytoplasmic portion of the chain corresponds to 54-75; the sequence is WAVDVAKNRGPDAKYTYGWKRA. The chain crosses the membrane as a helical span at residues 76–96; sequence EILGALINAVFLIALCFSIMI. The Vacuolar portion of the chain corresponds to 97 to 112; that stretch reads EALQRLIEPQEIQNPR. Residues 113-133 traverse the membrane as a helical segment; it reads LVLYVGVAGLISNVVGLFLFH. Residues 134–235 lie on the Cytoplasmic side of the membrane; the sequence is DHGSDSLHSH…GHRSLNMHGV (102 aa). 3 short sequence motifs (histidine repeat) span residues 141-145, 163-167, and 216-220; these read HSHSH and HDHSH. Disordered regions lie at residues 141 to 170 and 208 to 227; these read HSHS…HASL and QPLL…KPGH. Residues 149–170 show a composition bias toward polar residues; that stretch reads ESGNNDLDIESNATHSHSHASL. The segment covering 212–224 has biased composition (basic and acidic residues); sequence NHDDHDHSHESKK. The chain crosses the membrane as a helical span at residues 236-256; that stretch reads FLHVLGDALGNIGVIAAALFI. Over 257–265 the chain is Vacuolar; the sequence is WKTEYSWRY. The chain crosses the membrane as a helical span at residues 266 to 286; it reads YSDPIVSLIITIIIFSSALPL. Topologically, residues 287-442 are cytoplasmic; it reads SRRASRILLQ…AVNCNTSNCL (156 aa). Lys357 participates in a covalent cross-link: Glycyl lysine isopeptide (Lys-Gly) (interchain with G-Cter in ubiquitin). Phosphoserine occurs at positions 387, 393, and 397. Positions 391-419 are disordered; sequence GGSPSSSQEAFDSHGNTEHGRKKRSPTAY.

It belongs to the cation diffusion facilitator (CDF) transporter (TC 2.A.4) family. SLC30A subfamily.

The protein localises to the vacuole membrane. It carries out the reaction Zn(2+)(in) = Zn(2+)(out). Vacuolar transporter that regulates zinc homeostasis by mediating zinc transport and storage into the vacuole. ZRC1 senses zinc availability in the cytosol, which might be performed through the histidine repeat motifs, and transports zinc from the cytosol to the vacuole if zinc in cytosol is abundant, conferring resistance to zinc toxicity. Plays a role in resistance to zinc shock resulting from sudden influx of zinc into cytoplasm when ZRT1 and ZRT2 are induced in response to zinc depletion. The chain is Vacuolar zinc transporter ZRC1 from Saccharomyces cerevisiae (strain ATCC 204508 / S288c) (Baker's yeast).